The primary structure comprises 721 residues: K(+)-insensitive pyrophosphate-energized proton pump (721 aa).

5 consecutive transmembrane segments (helical) span residues 8–28 (LLGV…AVWV), 57–77 (YRTL…AIDM), 82–102 (FGLT…AGYL), 136–156 (VMGL…YLVF), and 168–188 (LVAL…GGGI). A substrate-binding site is contributed by lysine 191. Aspartate 194, aspartate 198, asparagine 221, and aspartate 224 together coordinate Mg(2+). A run of 5 helical transmembrane segments spans residues 247-267 (AIFL…IILF), 294-314 (ISLA…IGAF), 323-343 (ALAL…IVKI), 374-394 (YGVG…VLGI), and 416-436 (AGIF…GIII). Aspartate 446 contacts Mg(2+). 4 helical membrane-spanning segments follow: residues 483-503 (AIAS…FEIV), 527-547 (LINA…YFFS), 599-619 (FLIP…LLGW), and 621-641 (ALAG…LLMA). Residues aspartate 648, aspartate 672, and aspartate 676 each contribute to the Ca(2+) site. Lysine 679 serves as a coordination point for substrate. Residues 698–718 (VVFTYVIVSTNIALGIWPSGL) form a helical membrane-spanning segment.

Belongs to the H(+)-translocating pyrophosphatase (TC 3.A.10) family. K(+)-insensitive subfamily. Homodimer. The cofactor is Mg(2+).

The protein localises to the cell membrane. It catalyses the reaction diphosphate + H2O + H(+)(in) = 2 phosphate + 2 H(+)(out). Its function is as follows. Proton pump that utilizes the energy of pyrophosphate hydrolysis as the driving force for proton movement across the membrane. Generates a proton motive force. This is K(+)-insensitive pyrophosphate-energized proton pump from Pyrobaculum aerophilum (strain ATCC 51768 / DSM 7523 / JCM 9630 / CIP 104966 / NBRC 100827 / IM2).